Reading from the N-terminus, the 542-residue chain is CTP synthase (542 aa).

An amidoligase domain region spans residues 1–265; that stretch reads MARYVFITGG…DDEVLAAFGI (265 aa). S13 is a CTP binding site. S13 contributes to the UTP binding site. ATP-binding positions include 14 to 19 and D71; that span reads SLGKGI. Residues D71 and E139 each coordinate Mg(2+). Residues 146 to 148, 186 to 191, and K222 each bind CTP; these read DIE and KTKPTQ. UTP-binding positions include 186–191 and K222; that span reads KTKPTQ. Residues 291–541 enclose the Glutamine amidotransferase type-1 domain; sequence TIAIVGKYTG…IEAATEQSRL (251 aa). Position 353 (G353) interacts with L-glutamine. The active-site Nucleophile; for glutamine hydrolysis is C380. L-glutamine is bound by residues 381 to 384, E404, and R469; that span reads FGMQ. Active-site residues include H514 and E516.

This sequence belongs to the CTP synthase family. In terms of assembly, homotetramer.

It carries out the reaction UTP + L-glutamine + ATP + H2O = CTP + L-glutamate + ADP + phosphate + 2 H(+). It catalyses the reaction L-glutamine + H2O = L-glutamate + NH4(+). The enzyme catalyses UTP + NH4(+) + ATP = CTP + ADP + phosphate + 2 H(+). The protein operates within pyrimidine metabolism; CTP biosynthesis via de novo pathway; CTP from UDP: step 2/2. Its activity is regulated as follows. Allosterically activated by GTP, when glutamine is the substrate; GTP has no effect on the reaction when ammonia is the substrate. The allosteric effector GTP functions by stabilizing the protein conformation that binds the tetrahedral intermediate(s) formed during glutamine hydrolysis. Inhibited by the product CTP, via allosteric rather than competitive inhibition. Its function is as follows. Catalyzes the ATP-dependent amination of UTP to CTP with either L-glutamine or ammonia as the source of nitrogen. Regulates intracellular CTP levels through interactions with the four ribonucleotide triphosphates. The polypeptide is CTP synthase (Rhizobium johnstonii (strain DSM 114642 / LMG 32736 / 3841) (Rhizobium leguminosarum bv. viciae)).